The chain runs to 191 residues: Surfactant protein C (191 aa).

The propeptide occupies 1 to 23 (MDVGSKEVLMESPPDYSAAPRGR). S-palmitoyl cysteine attachment occurs at residues cysteine 28 and cysteine 29. Positions 59–191 (HMSQKHTEMV…LCGEVPLYYI (133 aa)) are excised as a propeptide. The region spanning 94–191 (FSFGSTGLVV…LCGEVPLYYI (98 aa)) is the BRICHOS domain. Cysteine 121 and cysteine 183 are oxidised to a cystine.

Its subcellular location is the secreted. It is found in the extracellular space. The protein localises to the surface film. In terms of biological role, pulmonary surfactant associated proteins promote alveolar stability by lowering the surface tension at the air-liquid interface in the peripheral air spaces. The protein is Surfactant protein C (SFTPC) of Macaca mulatta (Rhesus macaque).